Consider the following 196-residue polypeptide: Ribonuclease HII (196 aa).

Positions 9–196 constitute an RNase H type-2 domain; that stretch reads GLVCGIDEAG…GPVARQLSLL (188 aa). 3 residues coordinate a divalent metal cation: D15, E16, and D107.

Belongs to the RNase HII family. Mn(2+) is required as a cofactor. Mg(2+) serves as cofactor.

The protein resides in the cytoplasm. It carries out the reaction Endonucleolytic cleavage to 5'-phosphomonoester.. In terms of biological role, endonuclease that specifically degrades the RNA of RNA-DNA hybrids. This is Ribonuclease HII from Dechloromonas aromatica (strain RCB).